Here is a 258-residue protein sequence, read N- to C-terminus: Tritrans,polycis-undecaprenyl-diphosphate synthase (geranylgeranyl-diphosphate specific) (258 aa).

Aspartate 37 is a catalytic residue. Residue aspartate 37 coordinates Mg(2+). Substrate contacts are provided by residues 38–41 (GNRR), histidine 54, and 82–84 (STE). Catalysis depends on asparagine 85, which acts as the Proton acceptor. Substrate contacts are provided by residues phenylalanine 86, arginine 88, arginine 207, and 213-215 (RIS). Mg(2+) is bound at residue glutamate 226.

Belongs to the UPP synthase family. In terms of assembly, homodimer. The cofactor is Mg(2+).

It carries out the reaction geranylgeranyl diphosphate + 7 isopentenyl diphosphate = tri-trans,hepta-cis-undecaprenyl diphosphate + 7 diphosphate. In terms of biological role, catalyzes the sequential condensation of isopentenyl diphosphate (IPP) with geranylgeranyl diphosphate (GGPP) to yield (2Z,6Z,10Z,14Z,18Z,22Z,26Z,30E,34E,38E)-undecaprenyl diphosphate (tritrans,heptacis-UPP). It is probably the precursor of glycosyl carrier lipids. This Thermoplasma volcanium (strain ATCC 51530 / DSM 4299 / JCM 9571 / NBRC 15438 / GSS1) protein is Tritrans,polycis-undecaprenyl-diphosphate synthase (geranylgeranyl-diphosphate specific).